A 61-amino-acid polypeptide reads, in one-letter code: Small ribosomal subunit protein uS14 (61 aa).

4 residues coordinate Zn(2+): C24, C27, C40, and C43.

This sequence belongs to the universal ribosomal protein uS14 family. Zinc-binding uS14 subfamily. In terms of assembly, part of the 30S ribosomal subunit. Contacts proteins S3 and S10. Requires Zn(2+) as cofactor.

Binds 16S rRNA, required for the assembly of 30S particles and may also be responsible for determining the conformation of the 16S rRNA at the A site. The protein is Small ribosomal subunit protein uS14 of Mycoplasma capricolum subsp. capricolum (strain California kid / ATCC 27343 / NCTC 10154).